The sequence spans 379 residues: Sialidase-2 (379 aa).

The FRIP motif signature appears at 20 to 23 (YRIP). Substrate is bound by residues Arg21 and Arg41. The active-site Proton acceptor is the Asp46. A BNR 1 repeat occupies 127 to 138 (VSSTDHGRTWSP). Positions 179 and 181 each coordinate substrate. Residues 197 to 208 (FISLDHGHTWKL) form a BNR 2 repeat. Substrate is bound by residues Glu218, Arg237, and Arg303. Arg303 is a catalytic residue. The active-site Nucleophile is Tyr333. The active site involves Glu354.

The protein belongs to the glycosyl hydrolase 33 family. In terms of tissue distribution, highly expressed in heart.

Its subcellular location is the cytoplasm. The protein localises to the cytosol. It catalyses the reaction Hydrolysis of alpha-(2-&gt;3)-, alpha-(2-&gt;6)-, alpha-(2-&gt;8)- glycosidic linkages of terminal sialic acid residues in oligosaccharides, glycoproteins, glycolipids, colominic acid and synthetic substrates.. It carries out the reaction a ganglioside GD1a + H2O = a ganglioside GM1 + N-acetylneuraminate. The enzyme catalyses a ganglioside GM1 + H2O = a ganglioside GA1 + N-acetylneuraminate. The catalysed reaction is a ganglioside GT1b + H2O = a ganglioside GD1b + N-acetylneuraminate. It catalyses the reaction a ganglioside GD1b + H2O = a ganglioside GM1 + N-acetylneuraminate. It carries out the reaction a ganglioside GD3 + H2O = a ganglioside GM3 + N-acetylneuraminate. The enzyme catalyses a ganglioside GM3 + H2O = a beta-D-galactosyl-(1-&gt;4)-beta-D-glucosyl-(1&lt;-&gt;1)-ceramide + N-acetylneuraminate. The catalysed reaction is a ganglioside GM2 + H2O = a ganglioside GA2 + N-acetylneuraminate. It catalyses the reaction a neolactoside IV(3)-alpha-NeuAc-nLc4Cer(d18:1(4E)) + H2O = a neolactoside nLc4Cer(d18:1(4E)) + N-acetylneuraminate. It carries out the reaction N-acetyl-alpha-neuraminosyl-(2-&gt;3)-beta-D-galactosyl-(1-&gt;4)-D-glucose + H2O = lactose + N-acetylneuraminate. Its function is as follows. Exo-alpha-sialidase that catalyzes the hydrolytic cleavage of the terminal sialic acid (N-acetylneuraminic acid, Neu5Ac) of a glycan moiety in the catabolism of glycolipids, glycoproteins and oligosacharides. Recognizes sialyl linkage positions of the glycan moiety as well as the supramolecular organization of the sialoglycoconjugate. Displays preference for alpha-(2-&gt;3)-sialylated GD1a and GT1B gangliosides over alpha-(2-&gt;8)-sialylated GD1b, in both monomeric forms and micelles. Hydrolyzes exclusively monomeric GM1 ganglioside, but has no activity toward the miscellar form. Has lower sialidase activity for glycoproteins such as fetuin and TF/transferrin that carry a mixture of alpha-(2-&gt;3) and alpha-(2-&gt;6)-sialyl linkages. Cleaves milk oligosaccharide alpha-(2-&gt;3)-sialyllactose, but is inactive toward isomer alpha-(2-&gt;6)-sialyllactose isomer. Has no activity toward colominic acid, a homomer of alpha-(2-&gt;8)-linked Neu5Ac residues. This is Sialidase-2 (Neu2) from Mus musculus (Mouse).